A 342-amino-acid chain; its full sequence is Methylthioribose-1-phosphate isomerase (342 aa).

Substrate is bound by residues 49–51 (RGA), R86, and Q187. The active-site Proton donor is D228. 238-239 (NK) contributes to the substrate binding site.

It belongs to the eIF-2B alpha/beta/delta subunits family. MtnA subfamily.

It carries out the reaction 5-(methylsulfanyl)-alpha-D-ribose 1-phosphate = 5-(methylsulfanyl)-D-ribulose 1-phosphate. Its pathway is amino-acid biosynthesis; L-methionine biosynthesis via salvage pathway; L-methionine from S-methyl-5-thio-alpha-D-ribose 1-phosphate: step 1/6. Catalyzes the interconversion of methylthioribose-1-phosphate (MTR-1-P) into methylthioribulose-1-phosphate (MTRu-1-P). This is Methylthioribose-1-phosphate isomerase from Klebsiella pneumoniae (strain 342).